A 505-amino-acid polypeptide reads, in one-letter code: MSEQQAQGTDAVVDLNNELKTRREKLAALREQGIPFPNDFRRDHTSDQLHADFDAKENEELEALNVEVSVAGRMMTRRIMGKASFVTLQDVGGRIQLYVSRDDLPEGIYNEQFKKWDLGDILGAKGKLFKTKTGELSIHCTELRLLTKALRPLPDKFHGLQDQEARYRQRYLDLISNDESRKTFKIRSQIMAGIRQFMVGRDFMEVETPMMQVIPGGASARPFVTHHNALDLDMYLRIAPELYLKRLVVGGFERVFEINRNFRNEGISVRHNPEFTMMELYMAYADYKDLIELTESLFRTLAQNILGTTEVPYGDEVFDFGKPFVKLTMREAIKKYRPETEMADLDNYDSAKAIAESIGIKVEKSWGQGRIVTEIFEEVAEAHLIQPTFITEYPAEVSPLARRNDENPEITDRFEFFIGGREIGNGFSELNDAQDQAQRFQDQVDAKAAGDDEAMFFDEDYVTALEHGLPPTAGLGIGIDRMVMLFTNSHTIRDVILFPAMRPVK.

2 residues coordinate Mg(2+): Glu-415 and Glu-422.

Belongs to the class-II aminoacyl-tRNA synthetase family. Homodimer. Requires Mg(2+) as cofactor.

It localises to the cytoplasm. The catalysed reaction is tRNA(Lys) + L-lysine + ATP = L-lysyl-tRNA(Lys) + AMP + diphosphate. The polypeptide is Lysine--tRNA ligase (Enterobacter sp. (strain 638)).